The following is a 420-amino-acid chain: Probable pectate lyase C (420 aa).

The signal sequence occupies residues 1–20; the sequence is MKLSAPLLVSLAAFSQAVTA. N-linked (GlcNAc...) asparagine glycans are attached at residues N49, N165, and N202. Residue R205 is part of the active site. An EF-hand domain is found at 262-297; that stretch reads NANFHGYVQNNYYDPDKDGQLDGFELGVSSSNYGGV. Positions 275, 277, 279, 281, and 286 each coordinate Ca(2+). Residues 358–396 form a disordered region; sequence TMGGPGTLNGGTPAKDTDGDGIPDEAEKQLGTDPNTNDS. Residue N394 is glycosylated (N-linked (GlcNAc...) asparagine).

It belongs to the polysaccharide lyase 1 family. Ca(2+) is required as a cofactor.

It is found in the secreted. The enzyme catalyses Eliminative cleavage of (1-&gt;4)-alpha-D-galacturonan to give oligosaccharides with 4-deoxy-alpha-D-galact-4-enuronosyl groups at their non-reducing ends.. Its function is as follows. Pectinolytic enzyme consist of four classes of enzymes: pectin lyase, polygalacturonase, pectin methylesterase and rhamnogalacturonase. Among pectinolytic enzymes, pectin lyase is the most important in depolymerization of pectin, since it cleaves internal glycosidic bonds of highly methylated pectins. Favors pectate, the anion, over pectin, the methyl ester. The polypeptide is Probable pectate lyase C (plyC) (Aspergillus fumigatus (strain CBS 144.89 / FGSC A1163 / CEA10) (Neosartorya fumigata)).